We begin with the raw amino-acid sequence, 46 residues long: AVYVASPYAAGYGYAYPYAAAAYRAAPVVGAYAAYPYGVATYPYYY.

Component of the cuticle of migratory locust which contains more than 100 different structural proteins. The protein is Cuticle protein 4.9 of Locusta migratoria (Migratory locust).